A 197-amino-acid polypeptide reads, in one-letter code: Protocatechuate 3,4-dioxygenase alpha chain (197 aa).

3,4-dihydroxybenzoate is bound at residue arginine 130.

This sequence belongs to the intradiol ring-cleavage dioxygenase family. The enzyme is an oligomer of 12 copies of the alpha and beta chains. The cofactor is Fe(3+).

The enzyme catalyses 3,4-dihydroxybenzoate + O2 = 3-carboxy-cis,cis-muconate + 2 H(+). Its pathway is aromatic compound metabolism; beta-ketoadipate pathway; 3-carboxy-cis,cis-muconate from 3,4-dihydroxybenzoate: step 1/1. Plays an essential role in the utilization of numerous aromatic and hydroaromatic compounds via the beta-ketoadipate pathway. The chain is Protocatechuate 3,4-dioxygenase alpha chain (pcaG) from Burkholderia cepacia (Pseudomonas cepacia).